The chain runs to 171 residues: uncharacterized protein (171 aa).

This is an uncharacterized protein from Haemophilus influenzae (strain ATCC 51907 / DSM 11121 / KW20 / Rd).